The following is a 357-amino-acid chain: MEENKQRVKSMINILQLVAPGTPLREGIDNVLRAQTGGLIVLGYNEQIKSIVDGGFHINCAFSPASLYELAKMDGALILNETGSKILIANAQLVPESSIDSIETGMRHRTAERVAKQTGSLVVAISQRRNVITLYQGNLRYTLKDIGVILTKANQAIQTLEKYKAVWNDGITNLGILEFEEVVTMSEVVHVLHSVEMVLRIKNEILSYIHELGTEGRLIRLQLTELLADLEAEAALLIKDYYQEKTQDHHQILKKLQELANTQLLEDSDLVKLLGYPGQTSLEESVTPRGYRITSKISRVPPLIIENLINRFKTLQGVCRATINELDDVEGIGEVRAKKIREGLKRIQEHLYMSRHN.

Positions 8–146 (VKSMINILQL…GNLRYTLKDI (139 aa)) constitute a DAC domain. ATP contacts are provided by residues Gly75, Leu93, and 106–110 (MRHRT).

Belongs to the DisA family. In terms of assembly, homooctamer. It depends on Mg(2+) as a cofactor.

The catalysed reaction is 2 ATP = 3',3'-c-di-AMP + 2 diphosphate. Its function is as follows. Participates in a DNA-damage check-point that is active prior to asymmetric division when DNA is damaged. DisA forms globular foci that rapidly scan along the chromosomes during sporulation, searching for lesions. When a lesion is present, DisA pauses at the lesion site. This triggers a cellular response that culminates in a temporary block in sporulation initiation. Functionally, also has diadenylate cyclase activity, catalyzing the condensation of 2 ATP molecules into cyclic di-AMP (c-di-AMP). c-di-AMP acts as a signaling molecule that couples DNA integrity with progression of sporulation. The rise in c-di-AMP level generated by DisA while scanning the chromosome, operates as a positive signal that advances sporulation; upon encountering a lesion, the DisA focus arrests at the damaged site and halts c-di-AMP synthesis. This chain is DNA integrity scanning protein DisA, found in Bacillus anthracis (strain CDC 684 / NRRL 3495).